The sequence spans 633 residues: Phosphomethylpyrimidine synthase (633 aa).

Residues asparagine 245, methionine 274, tyrosine 303, histidine 339, 359–361 (SRG), 400–403 (DGLR), and glutamate 439 each bind substrate. Histidine 443 is a Zn(2+) binding site. Residue tyrosine 466 participates in substrate binding. Histidine 507 is a binding site for Zn(2+). Positions 587, 590, and 595 each coordinate [4Fe-4S] cluster.

This sequence belongs to the ThiC family. In terms of assembly, homodimer. [4Fe-4S] cluster serves as cofactor.

It carries out the reaction 5-amino-1-(5-phospho-beta-D-ribosyl)imidazole + S-adenosyl-L-methionine = 4-amino-2-methyl-5-(phosphooxymethyl)pyrimidine + CO + 5'-deoxyadenosine + formate + L-methionine + 3 H(+). It functions in the pathway cofactor biosynthesis; thiamine diphosphate biosynthesis. Functionally, catalyzes the synthesis of the hydroxymethylpyrimidine phosphate (HMP-P) moiety of thiamine from aminoimidazole ribotide (AIR) in a radical S-adenosyl-L-methionine (SAM)-dependent reaction. The protein is Phosphomethylpyrimidine synthase of Neisseria meningitidis serogroup C (strain 053442).